A 1002-amino-acid polypeptide reads, in one-letter code: Mannan endo-1,4-beta-mannosidase (1002 aa).

Positions 1 to 28 are cleaved as a signal peptide; it reads MKTTVTKLLATVAAASTIFGMSTLPAFA. Positions 49–396 constitute a GH26 domain; the sequence is AETRALFDKL…ADSNKNLMAS (348 aa). H144 provides a ligand contact to substrate. E205 serves as the catalytic Proton donor. The substrate site is built by W210 and Y278. E316 acts as the Nucleophile in catalysis. K384 is a binding site for substrate. CBM11 domains are found at residues 523–703 and 717–897; these read VDNV…GKRD and AKAQ…NEQT. Disordered regions lie at residues 702–722 and 888–969; these read RDAYAPNTNPTPGNTAKAQSV and PAEN…LSRT. The segment covering 707-719 has biased composition (polar residues); the sequence is PNTNPTPGNTAKA. Composition is skewed to basic and acidic residues over residues 897-913 and 952-966; these read TPKDESKTEVKADKEQE and PDTKEPADNTGKDGL. Residues 966–970 carry the LPXTG sorting signal motif; it reads LSRTG. Pentaglycyl murein peptidoglycan amidated threonine is present on T969. Residues 970–1002 constitute a propeptide, removed by sortase; that stretch reads GSNIISAIAAVAVLLLGGCAVLIARKRKGGDIE.

This sequence belongs to the glycosyl hydrolase 26 family. In terms of assembly, homodimer.

It is found in the secreted. The protein localises to the cell wall. It carries out the reaction Random hydrolysis of (1-&gt;4)-beta-D-mannosidic linkages in mannans, galactomannans and glucomannans.. Beta-mannanase likely involved in the utilization of carbohydrates in the human gut. Catalyzes the hydrolysis of different beta-1,4-linked mannans, such as ivory nut mannan, konjac glucomannan, as well as carob and guar gum galactomannans, to a mixture of oligosaccharides. The dominant product from ivory nut mannan is found to be mannotriose; mannobiose and mannotetraose are produced to a lesser extent. Does not hydrolyze mannobiose, and hydrolyzes mannotriose at a significantly lower rate than the longer oligosaccharides. The polypeptide is Mannan endo-1,4-beta-mannosidase (Bifidobacterium adolescentis (strain ATCC 15703 / DSM 20083 / NCTC 11814 / E194a)).